We begin with the raw amino-acid sequence, 322 residues long: Phosphatidylserine decarboxylase proenzyme (322 aa).

Residues D90, H147, and S254 each act as charge relay system; for autoendoproteolytic cleavage activity in the active site. S254 acts as the Schiff-base intermediate with substrate; via pyruvic acid; for decarboxylase activity in catalysis. S254 bears the Pyruvic acid (Ser); by autocatalysis mark. The interval 293–322 (PDAEPAPLPAEEIEAEHDASPLVDDKKDQV) is disordered. Residues 308-322 (EHDASPLVDDKKDQV) are compositionally biased toward basic and acidic residues.

The protein belongs to the phosphatidylserine decarboxylase family. PSD-B subfamily. Prokaryotic type I sub-subfamily. In terms of assembly, heterodimer of a large membrane-associated beta subunit and a small pyruvoyl-containing alpha subunit. Pyruvate is required as a cofactor. In terms of processing, is synthesized initially as an inactive proenzyme. Formation of the active enzyme involves a self-maturation process in which the active site pyruvoyl group is generated from an internal serine residue via an autocatalytic post-translational modification. Two non-identical subunits are generated from the proenzyme in this reaction, and the pyruvate is formed at the N-terminus of the alpha chain, which is derived from the carboxyl end of the proenzyme. The autoendoproteolytic cleavage occurs by a canonical serine protease mechanism, in which the side chain hydroxyl group of the serine supplies its oxygen atom to form the C-terminus of the beta chain, while the remainder of the serine residue undergoes an oxidative deamination to produce ammonia and the pyruvoyl prosthetic group on the alpha chain. During this reaction, the Ser that is part of the protease active site of the proenzyme becomes the pyruvoyl prosthetic group, which constitutes an essential element of the active site of the mature decarboxylase.

Its subcellular location is the cell membrane. It carries out the reaction a 1,2-diacyl-sn-glycero-3-phospho-L-serine + H(+) = a 1,2-diacyl-sn-glycero-3-phosphoethanolamine + CO2. It participates in phospholipid metabolism; phosphatidylethanolamine biosynthesis; phosphatidylethanolamine from CDP-diacylglycerol: step 2/2. Catalyzes the formation of phosphatidylethanolamine (PtdEtn) from phosphatidylserine (PtdSer). The sequence is that of Phosphatidylserine decarboxylase proenzyme from Escherichia coli O45:K1 (strain S88 / ExPEC).